The chain runs to 526 residues: Putative UDP-glucuronosyltransferase ugt-48 (526 aa).

Residues 1–17 form the signal peptide; sequence MLLRILTFLAVCQVTTS. Residues Asn58 and Asn305 are each glycosylated (N-linked (GlcNAc...) asparagine). Residues 489-509 traverse the membrane as a helical segment; the sequence is FYNLDIIITAASIPVLIFIVL. A glycan (N-linked (GlcNAc...) asparagine) is linked at Asn513.

It belongs to the UDP-glycosyltransferase family. Interacts with cmd-1 in the presence of Ca(2+).

The protein resides in the membrane. It carries out the reaction glucuronate acceptor + UDP-alpha-D-glucuronate = acceptor beta-D-glucuronoside + UDP + H(+). The chain is Putative UDP-glucuronosyltransferase ugt-48 (ugt-48) from Caenorhabditis elegans.